Reading from the N-terminus, the 1365-residue chain is Serine/threonine-protein kinase LMTK1 (1365 aa).

The helical transmembrane segment at 32–52 (LAVVAVSFSGIFTVVILMLAC) threads the bilayer. One can recognise a Protein kinase domain in the interval 126–396 (LLYLKEIGHG…PTAEEVHLLL (271 aa)). Residues 132-140 (IGHGWFGKV) and Lys157 each bind ATP. Asp254 acts as the Proton acceptor in catalysis. The residue at position 500 (Ser500) is a Phosphoserine. Disordered stretches follow at residues 550–623 (PDCA…LPAE), 638–698 (DDPL…GYVS), 791–1186 (QEAE…PAVP), 1237–1293 (ESPT…EWDG), and 1343–1365 (ISDS…YTEA). A compositionally biased stretch (polar residues) spans 560–575 (QAVTDQDNNSEESTVA). 2 stretches are compositionally biased toward low complexity: residues 638–655 (DDPL…QPSP) and 675–686 (SSNMSANNNSAS). Polar residues-rich tracts occupy residues 848–860 (LESS…QEAP) and 869–879 (EATSGVFTDLS). 2 stretches are compositionally biased toward low complexity: residues 904–918 (PDSL…SASD) and 981–993 (PLLS…LSKK). Over residues 1015 to 1030 (PEKHSGIQDSQKEQDL) the composition is skewed to basic and acidic residues. Ser1035 carries the phosphoserine modification. Polar residues predominate over residues 1037–1053 (GHQSVQAFPRSAVSSEV). A compositionally biased stretch (low complexity) spans 1072 to 1083 (PLGAQGPVGVQP). Residues 1104 to 1132 (GSGTEPQGPSGQLSGRAQQGQMGNPSTPR) show a composition bias toward polar residues. Acidic residues predominate over residues 1150-1164 (PEEDEDTEDSEESDE). Thr1156 carries the phosphothreonine modification. Phosphoserine occurs at positions 1159, 1162, 1175, 1178, and 1253. Over residues 1354–1365 (PAAGAGGRYTEA) the composition is skewed to gly residues.

This sequence belongs to the protein kinase superfamily. Tyr protein kinase family. As to quaternary structure, interacts with CDK5. Post-translationally, autophosphorylated. Phosphorylated by CDK5. As to expression, expressed in brain, and, to a lower extent, in kidney, heart, lung and skeletal muscle. In the brain, expressed in the olfactory bulb, cerebellum, striatum, hippocampal formation, thalamus, hypothalamus, and pontine nuclei (at protein level).

Its subcellular location is the membrane. It is found in the cytoplasm. The protein localises to the perinuclear region. The protein resides in the cell projection. It localises to the dendrite. Its subcellular location is the axon. It is found in the growth cone. It catalyses the reaction L-seryl-[protein] + ATP = O-phospho-L-seryl-[protein] + ADP + H(+). The catalysed reaction is L-threonyl-[protein] + ATP = O-phospho-L-threonyl-[protein] + ADP + H(+). Its function is as follows. May be involved in neuronal differentiation. The polypeptide is Serine/threonine-protein kinase LMTK1 (Aatk) (Mus musculus (Mouse)).